We begin with the raw amino-acid sequence, 136 residues long: uncharacterized protein (136 aa).

This is an uncharacterized protein from Pseudomonas amygdali pv. tabaci (Pseudomonas syringae pv. tabaci).